The sequence spans 283 residues: Glutamate racemase (283 aa).

Residues 13–14 and 45–46 each bind substrate; these read DS and YG. Residue Cys-76 is the Proton donor/acceptor of the active site. Substrate is bound at residue 77-78; it reads NT. Cys-186 serves as the catalytic Proton donor/acceptor. Residue 187 to 188 coordinates substrate; that stretch reads TH.

The protein belongs to the aspartate/glutamate racemases family.

It carries out the reaction L-glutamate = D-glutamate. Its pathway is cell wall biogenesis; peptidoglycan biosynthesis. Provides the (R)-glutamate required for cell wall biosynthesis. The sequence is that of Glutamate racemase from Microcystis aeruginosa (strain NIES-843 / IAM M-2473).